A 232-amino-acid polypeptide reads, in one-letter code: Triosephosphate isomerase (232 aa).

6–8 (NFK) lines the substrate pocket. His90 serves as the catalytic Electrophile. Glu159 acts as the Proton acceptor in catalysis. Residues Gly165 and Ser195 each contribute to the substrate site.

This sequence belongs to the triosephosphate isomerase family. As to quaternary structure, homodimer.

The protein resides in the cytoplasm. The catalysed reaction is D-glyceraldehyde 3-phosphate = dihydroxyacetone phosphate. It functions in the pathway carbohydrate biosynthesis; gluconeogenesis. The protein operates within carbohydrate degradation; glycolysis; D-glyceraldehyde 3-phosphate from glycerone phosphate: step 1/1. In terms of biological role, involved in the gluconeogenesis. Catalyzes stereospecifically the conversion of dihydroxyacetone phosphate (DHAP) to D-glyceraldehyde-3-phosphate (G3P). This chain is Triosephosphate isomerase, found in Wolinella succinogenes (strain ATCC 29543 / DSM 1740 / CCUG 13145 / JCM 31913 / LMG 7466 / NCTC 11488 / FDC 602W) (Vibrio succinogenes).